Consider the following 82-residue polypeptide: MKIRKANINTQTGMITDVYLHENRKELRTLVAVPQLEWSTIISYEEDKATLPERLEASLRRHTEETPAGELAKKIIHWVTEM.

This is an uncharacterized protein from Bacillus subtilis (strain 168).